The primary structure comprises 1234 residues: PAN2-PAN3 deadenylation complex catalytic subunit PAN2 (1234 aa).

The segment at L12–V32 is disordered. Residues N14–N30 show a composition bias toward low complexity. WD repeat units follow at residues N176–T213, A272–A315, and Q342–K381. A disordered region spans residues P323–H346. A compositionally biased stretch (low complexity) spans Q333–Q344. A linker region spans residues F383–E537. One can recognise a USP domain in the interval K538–V946. Positions P751 to N775 are disordered. Low complexity predominate over residues Q754–Q772. A divalent metal cation-binding residues include D1004, E1006, D1138, and D1191. Positions G1072–Y1199 constitute an Exonuclease domain.

Belongs to the peptidase C19 family. PAN2 subfamily. As to quaternary structure, forms a heterotrimer with an asymmetric homodimer of the regulatory subunit PAN3 to form the poly(A)-nuclease (PAN) deadenylation complex. It depends on a divalent metal cation as a cofactor.

The protein resides in the cytoplasm. It catalyses the reaction Exonucleolytic cleavage of poly(A) to 5'-AMP.. Its activity is regulated as follows. Positively regulated by the regulatory subunit PAN3. Catalytic subunit of the poly(A)-nuclease (PAN) deadenylation complex, one of two cytoplasmic mRNA deadenylases involved in mRNA turnover. PAN specifically shortens poly(A) tails of RNA and the activity is stimulated by poly(A)-binding protein PAB1. PAN deadenylation is followed by rapid degradation of the shortened mRNA tails by the CCR4-NOT complex. Deadenylated mRNAs are then degraded by two alternative mechanisms, namely exosome-mediated 3'-5' exonucleolytic degradation, or deadenylation-dependent mRNA decaping and subsequent 5'-3' exonucleolytic degradation by XRN1. May also be involved in post-transcriptional maturation of mRNA poly(A) tails. The polypeptide is PAN2-PAN3 deadenylation complex catalytic subunit PAN2 (Lodderomyces elongisporus (strain ATCC 11503 / CBS 2605 / JCM 1781 / NBRC 1676 / NRRL YB-4239) (Yeast)).